We begin with the raw amino-acid sequence, 596 residues long: Elongation factor 4 (596 aa).

The tr-type G domain maps to 2-184 (KHIRNFSIIA…EIVAKIPPPV (183 aa)). GTP contacts are provided by residues 14 to 19 (DHGKST) and 131 to 134 (NKID).

It belongs to the TRAFAC class translation factor GTPase superfamily. Classic translation factor GTPase family. LepA subfamily.

Its subcellular location is the cell inner membrane. It carries out the reaction GTP + H2O = GDP + phosphate + H(+). Functionally, required for accurate and efficient protein synthesis under certain stress conditions. May act as a fidelity factor of the translation reaction, by catalyzing a one-codon backward translocation of tRNAs on improperly translocated ribosomes. Back-translocation proceeds from a post-translocation (POST) complex to a pre-translocation (PRE) complex, thus giving elongation factor G a second chance to translocate the tRNAs correctly. Binds to ribosomes in a GTP-dependent manner. This chain is Elongation factor 4, found in Shewanella denitrificans (strain OS217 / ATCC BAA-1090 / DSM 15013).